The primary structure comprises 731 residues: DNA ligase (731 aa).

NAD(+)-binding positions include 59 to 63 (DSEYD), 108 to 109 (SL), and Glu142. Lys144 functions as the N6-AMP-lysine intermediate in the catalytic mechanism. Residues Arg165, Glu202, Lys318, and Lys342 each contribute to the NAD(+) site. Residues Cys434, Cys437, Cys452, and Cys458 each coordinate Zn(2+). The BRCT domain maps to 645 to 731 (LASSPLSGKI…ENDGQDSIKI (87 aa)).

It belongs to the NAD-dependent DNA ligase family. LigA subfamily. The cofactor is Mg(2+). Mn(2+) serves as cofactor.

It catalyses the reaction NAD(+) + (deoxyribonucleotide)n-3'-hydroxyl + 5'-phospho-(deoxyribonucleotide)m = (deoxyribonucleotide)n+m + AMP + beta-nicotinamide D-nucleotide.. Functionally, DNA ligase that catalyzes the formation of phosphodiester linkages between 5'-phosphoryl and 3'-hydroxyl groups in double-stranded DNA using NAD as a coenzyme and as the energy source for the reaction. It is essential for DNA replication and repair of damaged DNA. This chain is DNA ligase, found in Zymomonas mobilis subsp. mobilis (strain ATCC 31821 / ZM4 / CP4).